The sequence spans 473 residues: Photosystem II CP43 reaction center protein (473 aa).

A propeptide spanning residues 1-14 (MKTLYSPRRFYPVE) is cleaved from the precursor. T15 carries the N-acetylthreonine modification. T15 is subject to Phosphothreonine. The next 5 helical transmembrane spans lie at 69-93 (LFEV…PHLA), 134-155 (LLGP…KDRN), 178-200 (KALY…RKIS), 255-275 (KPFA…LSYS), and 291-312 (WFNN…ASQA). Residue E367 participates in [CaMn4O5] cluster binding. Residues 447–471 (RARAAAAGFEKGIDRDLEPVLFMTP) form a helical membrane-spanning segment.

The protein belongs to the PsbB/PsbC family. PsbC subfamily. As to quaternary structure, PSII is composed of 1 copy each of membrane proteins PsbA, PsbB, PsbC, PsbD, PsbE, PsbF, PsbH, PsbI, PsbJ, PsbK, PsbL, PsbM, PsbT, PsbX, PsbY, PsbZ, Psb30/Ycf12, at least 3 peripheral proteins of the oxygen-evolving complex and a large number of cofactors. It forms dimeric complexes. Binds multiple chlorophylls and provides some of the ligands for the Ca-4Mn-5O cluster of the oxygen-evolving complex. It may also provide a ligand for a Cl- that is required for oxygen evolution. PSII binds additional chlorophylls, carotenoids and specific lipids. is required as a cofactor.

The protein resides in the plastid. It is found in the chloroplast thylakoid membrane. Functionally, one of the components of the core complex of photosystem II (PSII). It binds chlorophyll and helps catalyze the primary light-induced photochemical processes of PSII. PSII is a light-driven water:plastoquinone oxidoreductase, using light energy to abstract electrons from H(2)O, generating O(2) and a proton gradient subsequently used for ATP formation. In Ranunculus macranthus (Large buttercup), this protein is Photosystem II CP43 reaction center protein.